Here is a 230-residue protein sequence, read N- to C-terminus: RING finger protein 141 (230 aa).

The RING-type zinc-finger motif lies at 154–191 (ECCICMDGRVDLILPCAHSFCQKCIDKWSDRHRSCPVC).

This chain is RING finger protein 141 (RNF141), found in Gallus gallus (Chicken).